Reading from the N-terminus, the 242-residue chain is Ubiquinone biosynthesis O-methyltransferase (242 aa).

Positions 44, 64, 85, and 129 each coordinate S-adenosyl-L-methionine.

It belongs to the methyltransferase superfamily. UbiG/COQ3 family.

The enzyme catalyses a 3-demethylubiquinol + S-adenosyl-L-methionine = a ubiquinol + S-adenosyl-L-homocysteine + H(+). The catalysed reaction is a 3-(all-trans-polyprenyl)benzene-1,2-diol + S-adenosyl-L-methionine = a 2-methoxy-6-(all-trans-polyprenyl)phenol + S-adenosyl-L-homocysteine + H(+). It functions in the pathway cofactor biosynthesis; ubiquinone biosynthesis. In terms of biological role, O-methyltransferase that catalyzes the 2 O-methylation steps in the ubiquinone biosynthetic pathway. The polypeptide is Ubiquinone biosynthesis O-methyltransferase (Klebsiella pneumoniae (strain 342)).